The primary structure comprises 272 residues: Putative phosphoenolpyruvate synthase regulatory protein (272 aa).

Residue 152-159 (GVSRCGKT) participates in ADP binding.

Belongs to the pyruvate, phosphate/water dikinase regulatory protein family. PSRP subfamily.

The enzyme catalyses [pyruvate, water dikinase] + ADP = [pyruvate, water dikinase]-phosphate + AMP + H(+). It carries out the reaction [pyruvate, water dikinase]-phosphate + phosphate + H(+) = [pyruvate, water dikinase] + diphosphate. Its function is as follows. Bifunctional serine/threonine kinase and phosphorylase involved in the regulation of the phosphoenolpyruvate synthase (PEPS) by catalyzing its phosphorylation/dephosphorylation. The chain is Putative phosphoenolpyruvate synthase regulatory protein from Pseudomonas putida (strain W619).